Here is a 293-residue protein sequence, read N- to C-terminus: DNA-directed RNA polymerase III subunit RPC6 (293 aa).

This sequence belongs to the eukaryotic RPC34/RPC39 RNA polymerase subunit family. Component of the RNA polymerase III (Pol III) complex consisting of 17 subunits.

The protein localises to the nucleus. Its function is as follows. DNA-dependent RNA polymerase catalyzes the transcription of DNA into RNA using the four ribonucleoside triphosphates as substrates. Specific peripheric component of RNA polymerase III which synthesizes small RNAs, such as 5S rRNA and tRNAs. The chain is DNA-directed RNA polymerase III subunit RPC6 from Drosophila melanogaster (Fruit fly).